The primary structure comprises 813 residues: Phosphoribosylformylglycinamidine synthase subunit PurL (813 aa).

The active site involves His-56. Tyr-59 and Lys-103 together coordinate ATP. Glu-105 lines the Mg(2+) pocket. Substrate is bound by residues 106-109 (SHNH) and Arg-128. His-107 functions as the Proton acceptor in the catalytic mechanism. A Mg(2+)-binding site is contributed by Asp-129. Gln-253 is a substrate binding site. Residue Asp-281 coordinates Mg(2+). Residue 325–327 (ESQ) coordinates substrate. The ATP site is built by Asn-511 and Gly-548. Asn-549 contributes to the Mg(2+) binding site. Residue Ser-551 participates in substrate binding.

It belongs to the FGAMS family. Monomer. Part of the FGAM synthase complex composed of 1 PurL, 1 PurQ and 2 PurS subunits.

It is found in the cytoplasm. The enzyme catalyses N(2)-formyl-N(1)-(5-phospho-beta-D-ribosyl)glycinamide + L-glutamine + ATP + H2O = 2-formamido-N(1)-(5-O-phospho-beta-D-ribosyl)acetamidine + L-glutamate + ADP + phosphate + H(+). It participates in purine metabolism; IMP biosynthesis via de novo pathway; 5-amino-1-(5-phospho-D-ribosyl)imidazole from N(2)-formyl-N(1)-(5-phospho-D-ribosyl)glycinamide: step 1/2. Its function is as follows. Part of the phosphoribosylformylglycinamidine synthase complex involved in the purines biosynthetic pathway. Catalyzes the ATP-dependent conversion of formylglycinamide ribonucleotide (FGAR) and glutamine to yield formylglycinamidine ribonucleotide (FGAM) and glutamate. The FGAM synthase complex is composed of three subunits. PurQ produces an ammonia molecule by converting glutamine to glutamate. PurL transfers the ammonia molecule to FGAR to form FGAM in an ATP-dependent manner. PurS interacts with PurQ and PurL and is thought to assist in the transfer of the ammonia molecule from PurQ to PurL. The polypeptide is Phosphoribosylformylglycinamidine synthase subunit PurL (Corynebacterium jeikeium (strain K411)).